We begin with the raw amino-acid sequence, 66 residues long: Large ribosomal subunit protein bL35 (66 aa).

The disordered stretch occupies residues 21-40 (KIKSTQSAKRHGMTKRSKRS). Over residues 28 to 40 (AKRHGMTKRSKRS) the composition is skewed to basic residues.

Belongs to the bacterial ribosomal protein bL35 family.

This chain is Large ribosomal subunit protein bL35, found in Ehrlichia canis (strain Jake).